Reading from the N-terminus, the 134-residue chain is Small ribosomal subunit protein uS8 (134 aa).

This sequence belongs to the universal ribosomal protein uS8 family. In terms of assembly, part of the 30S ribosomal subunit. Contacts proteins S5 and S12.

Its function is as follows. One of the primary rRNA binding proteins, it binds directly to 16S rRNA central domain where it helps coordinate assembly of the platform of the 30S subunit. This Thermotoga sp. (strain RQ2) protein is Small ribosomal subunit protein uS8.